Consider the following 551-residue polypeptide: E3 ubiquitin-protein ligase TRIM8 (551 aa).

An RING-type zinc finger spans residues cysteine 15–asparagine 56. 2 consecutive B box-type zinc fingers follow at residues cysteine 92–histidine 132 and valine 140–valine 182. Coiled coils occupy residues aspartate 181 to glutamine 249 and glutamate 274 to aspartate 295. A disordered region spans residues glutamine 399 to leucine 457. 2 stretches are compositionally biased toward polar residues: residues threonine 405–histidine 424 and tyrosine 446–methionine 456.

The protein belongs to the TRIM/RBCC family. Homodimer. Interacts with SOCS1 (via) SH2 domain and SOCS box. Interacts with HSP90AB1; prevents nucleus translocation of phosphorylated STAT3 and HSP90AB1. Interacts with MAP3K7/TAK1. Interacts with PIAS3. Interacts with TICAM1. Interacts with TRIM15; this interaction prevents TRIM8 cytoplasmic translocation. As to expression, high expression in heart, liver, and thymus. Expressed in embryonic CNS, kidney, lens and gut.

The enzyme catalyses S-ubiquitinyl-[E2 ubiquitin-conjugating enzyme]-L-cysteine + [acceptor protein]-L-lysine = [E2 ubiquitin-conjugating enzyme]-L-cysteine + N(6)-ubiquitinyl-[acceptor protein]-L-lysine.. The protein operates within protein modification; protein ubiquitination. Functionally, E3 ubiquitin-protein ligase that participates in multiple biological processes including cell survival, differentiation, apoptosis, and in particular, the innate immune response. Participates in the activation of interferon-gamma signaling by promoting proteasomal degradation of the repressor SOCS1. Plays a positive role in the TNFalpha and IL-1beta signaling pathways. Mechanistically, induces the 'Lys-63'-linked polyubiquitination of MAP3K7/TAK1 component leading to the activation of NF-kappa-B. Also modulates STAT3 activity through negative regulation of PIAS3, either by degradation of PIAS3 through the ubiquitin-proteasome pathway or exclusion of PIAS3 from the nucleus. Negatively regulates TLR3/4-mediated innate immune response by catalyzing 'Lys-6'- and 'Lys-33'-linked polyubiquitination of TICAM1 and thereby disrupting the TICAM1-TBK1 interaction. The polypeptide is E3 ubiquitin-protein ligase TRIM8 (Trim8) (Mus musculus (Mouse)).